The primary structure comprises 179 residues: Large ribosomal subunit protein uL5 (179 aa).

This sequence belongs to the universal ribosomal protein uL5 family. In terms of assembly, part of the 50S ribosomal subunit; part of the 5S rRNA/L5/L18/L25 subcomplex. Contacts the 5S rRNA and the P site tRNA. Forms a bridge to the 30S subunit in the 70S ribosome.

In terms of biological role, this is one of the proteins that bind and probably mediate the attachment of the 5S RNA into the large ribosomal subunit, where it forms part of the central protuberance. In the 70S ribosome it contacts protein S13 of the 30S subunit (bridge B1b), connecting the 2 subunits; this bridge is implicated in subunit movement. Contacts the P site tRNA; the 5S rRNA and some of its associated proteins might help stabilize positioning of ribosome-bound tRNAs. The chain is Large ribosomal subunit protein uL5 from Synechococcus sp. (strain CC9605).